We begin with the raw amino-acid sequence, 880 residues long: Protein translocase subunit SecA (880 aa).

ATP-binding positions include glutamine 86, 104–108, and aspartate 511; that span reads GEGKT. The interval 837–871 is disordered; the sequence is AQKIQRSDGDGARRPVEKPKKIGRNDPCPCGSGKK. Basic and acidic residues predominate over residues 841-860; that stretch reads QRSDGDGARRPVEKPKKIGR. Zn(2+)-binding residues include cysteine 864, cysteine 866, cysteine 875, and cysteine 876.

It belongs to the SecA family. As to quaternary structure, monomer and homodimer. Part of the essential Sec protein translocation apparatus which comprises SecA, SecYEG and auxiliary proteins SecDF. Other proteins may also be involved. Zn(2+) serves as cofactor.

Its subcellular location is the cell inner membrane. The protein localises to the cytoplasm. The catalysed reaction is ATP + H2O + cellular proteinSide 1 = ADP + phosphate + cellular proteinSide 2.. In terms of biological role, part of the Sec protein translocase complex. Interacts with the SecYEG preprotein conducting channel. Has a central role in coupling the hydrolysis of ATP to the transfer of proteins into and across the cell membrane, serving as an ATP-driven molecular motor driving the stepwise translocation of polypeptide chains across the membrane. In Thermodesulfovibrio yellowstonii (strain ATCC 51303 / DSM 11347 / YP87), this protein is Protein translocase subunit SecA.